A 1239-amino-acid chain; its full sequence is MELPNYSRQLLQQLYTLCKEQQFCDCTISIGTIYFRAHKLVLAAASLLFKTLLDNTDTISIDASVVSPEEFALLLEMMYTGKLPVGKHNFSKIISLADSLQMFDVAVSCKNLLTSLVNCSVQGQVVRDVSAPSSETFRKEPEKPQVEILSSEGAGEPHSSPELAATPGGPVKAETEEAAHSVSQEMSVNSPTAQESQRNAETPAETPTTAEACSPSPAVQTFSEAKKTSTEPGCERKHYQLNFLLENEGVFSDALMVTQDVLKKLEMCSEIKGPQKEMIVKCFEGEGGHSAFQRILGKVREESLDVQTVVSLLRLYQYSNPAVKTALLDRKPEDVDTVQPKGSTEEGKTLSVLLLEHKEDLIQCVTQLRPIMESLETAKEEFLTGTEKRVILNCCEGRTPKETIENLLHRMTEEKTLTAEGLVKLLQAVKTTFPNLGLLLEKLQKSATLPSTTVQPSPDDYGTELLRRYHENLSEIFTDNQILLKMISHMTSLAPGEREVMEKLVKRDSGSGGFNSLISAVLEKQTLSATAIWQLLLVVQETKTCPLDLLMEEIRREPGADAFFRAVTTPEHATLETILRHNQLILEAIQQKIEYKLFTSEEEHLAETVKEILSIPSETASPEASLRAVLSRAMEKSVPAIEICHLLCSVHKSFPGLQPVMQELAYIGVLTKEDGEKETWKVSNKFHLEANNKEDEKAAKEDSQPGEQNDQGETGSLPGQQEKEASASPDPAKKSFICKACDKSFHFYCRLKVHMKRCRVAKSKQVQCKECSETKDSKKELDKHQLEAHGAGGEPDAPKKKKKRLPVTCDLCGREFAHASGMQYHKLTEHFDEKPFSCEECGAKFAANSTLKNHLRLHTGDRPFMCKHCLMTFTQASALAYHTKKKHSEGKMYACQYCDAVFAQSIELSRHVRTHTGDKPYVCRDCGKGFRQANGLSIHLHTFHNIEDPYDCKKCRMSFPTLQDHRKHIHEVHSKEYHPCPTCGKIFSAPSMLERHVVTHVGGKPFSCGICNKAYQQLSGLWYHNRTHHPDVFAAQNHRSSKFSSLQCSSCDKTFPNTIEHKKHIKAEHADMKFHECDQCKELFPTPALLQVHVKCQHSGSQPFRCLYCAATFRFPGALQHHVTTEHFKQSETTFPCELCGELFTSQAQLDSHLESEHPKVMSTETQAAASQMAQVIQTPEPVAPTEQVITLEETQLAGSQVFVTLPDSQASQASSELVAVTVEDLLDGTVTLICGEAK.

Residues 24 to 87 enclose the BTB domain; it reads CDCTISIGTI…MYTGKLPVGK (64 aa). Disordered stretches follow at residues 130 to 231, 687 to 732, and 779 to 801; these read SAPS…TSTE, HLEA…PDPA, and KELDKHQLEAHGAGGEPDAPKKK. Positions 136 to 145 are enriched in basic and acidic residues; it reads TFRKEPEKPQ. Over residues 181–199 the composition is skewed to polar residues; the sequence is SVSQEMSVNSPTAQESQRN. Phosphoserine is present on S190. The segment covering 200-212 has biased composition (low complexity); it reads AETPAETPTTAEA. The span at 687-703 shows a compositional bias: basic and acidic residues; sequence HLEANNKEDEKAAKEDS. At S703 the chain carries Phosphoserine. Residues 705–719 show a composition bias toward polar residues; that stretch reads PGEQNDQGETGSLPG. 10 consecutive C2H2-type zinc fingers follow at residues 807-830, 836-858, 864-887, 893-915, 921-944, 950-973, 978-1000, 1006-1029, 1046-1069, and 1075-1098; these read VTCDLCGREFAHASGMQYHKLTEH, FSCEECGAKFAANSTLKNHLRLH, FMCKHCLMTFTQASALAYHTKKKH, YACQYCDAVFAQSIELSRHVRTH, YVCRDCGKGFRQANGLSIHLHTFH, YDCKKCRMSFPTLQDHRKHIHEVH, HPCPTCGKIFSAPSMLERHVVTH, FSCGICNKAYQQLSGLWYHNRTHH, LQCSSCDKTFPNTIEHKKHIKAEH, and HECDQCKELFPTPALLQVHVKCQH. Residue K1066 forms a Glycyl lysine isopeptide (Lys-Gly) (interchain with G-Cter in SUMO2) linkage. Residues 1104-1127 form a C2H2-type 11; atypical zinc finger; it reads FRCLYCAATFRFPGALQHHVTTEH. Residues 1135 to 1158 form a C2H2-type 12 zinc finger; that stretch reads FPCELCGELFTSQAQLDSHLESEH.

This sequence belongs to the krueppel C2H2-type zinc-finger protein family.

The protein resides in the nucleus. Functionally, may be involved in transcriptional regulation. The chain is Zinc finger and BTB domain-containing protein 40 (ZBTB40) from Homo sapiens (Human).